A 691-amino-acid chain; its full sequence is MEESSLSRAPSRGGVNFLNVARTYIPNTKVECHYTLPPGTMPSASDWIGIFKVEAACVRDYHTFVWSSVPESTTDGSPTHASVQFQASYLPKPGAQLYQFRYVNRQGRVCGQSPPFQFREPRPMDELVTLEEADGGSDILLVVPKATVLQNQLDESQQERNDLMQLKLQLEDQVTELRSRVQELEAALATARQEHSELTEQYKGLSRSHGELSEERDILSQQQGDHVARILELEDDIQTMSDKVLMKEVELDRVRDTVKALTREQEKLLRQLKEFQADKEQSEAELQTVREENCCLNTELEEAKSRQEEQGAQVQRLKDKLAHMKDTLGQAQQKVAELEPLKEQLRGVQELAASSQQKAALLGEELASAAGARDRTIAELHRSRLEVAEVNGRLAELSLHMKEEKCQWSKERTGLLQSMEAEKDKILKLSAEILRLEKTVQEERTQSHVFKTELAREKDSSLVQLSESKRELTELRSALRVLQKEKEQLQTEKQELLEYMRKLEARLEKVADEKWTEDAATEDEEATAGLSCPASLTDSEDESPEDMRLPSYGLCESGNTSSSPPGPREPSSLVVINQPAPIAPQFSGPGEASSSDSEAEDEKSVLMAAVQSGGEEASLLLPELGSAFYDVASAFTVSSLSEASPGVPANPPWKECPICKERFPAESDKDALEGHMDGHFFFSTQDPFTFE.

Residues 1–30 form a p300 KIX-binding region; the sequence is MEESSLSRAPSRGGVNFLNVARTYIPNTKV. The tract at residues 1 to 190 is N-terminal AD (CTNNB1 binding site); it reads MEESSLSRAP…VQELEAALAT (190 aa). The residue at position 4 (S4) is a Phosphoserine. The segment at 45-125 is interaction with GATA1; sequence SDWIGIFKVE…FQFREPRPMD (81 aa). Coiled coils occupy residues 145-205, 232-339, and 417-514; these read KATV…YKGL, ELED…AELE, and QSME…ADEK. The interval 501–691 is C-terminal AD (CTNNB1 binding site); interaction with CCAR1; sequence RKLEARLEKV…FSTQDPFTFE (191 aa). The disordered stretch occupies residues 512–605; sequence DEKWTEDAAT…DSEAEDEKSV (94 aa). Residues 653–679 form a UBZ1-type zinc finger; the sequence is WKECPICKERFPAESDKDALEGHMDGH. 4 residues coordinate Zn(2+): C656, C659, H675, and H679.

The protein belongs to the CALCOCO family. Part of a calphoglin complex consisting of CALCOCO1, PPA1 and PGM. Interacts with the bHLH-PAS domains of GRIP1, AHR and ARNT. Interacts with CTNNB1 via both its N- and C-terminal regions. Interacts with EP300. Interacts with CCAR1 (via N-terminus) and GATA1. As to expression, expressed in all tissues examined except spleen, with high levels of expression in the heart and kidney.

It is found in the cytoplasm. It localises to the nucleus. Functions as a coactivator for aryl hydrocarbon and nuclear receptors (NR). Recruited to promoters through its contact with the N-terminal basic helix-loop-helix-Per-Arnt-Sim (PAS) domain of transcription factors or coactivators, such as NCOA2. During ER-activation acts synergistically in combination with other NCOA2-binding proteins, such as EP300, CREBBP and CARM1. Involved in the transcriptional activation of target genes in the Wnt/CTNNB1 pathway. Functions as a secondary coactivator in LEF1-mediated transcriptional activation via its interaction with CTNNB1. Coactivator function for nuclear receptors and LEF1/CTNNB1 involves differential utilization of two different activation regions. In association with CCAR1 enhances GATA1- and MED1-mediated transcriptional activation from the gamma-globin promoter during erythroid differentiation of K562 erythroleukemia cells. In Mus musculus (Mouse), this protein is Calcium-binding and coiled-coil domain-containing protein 1 (Calcoco1).